Reading from the N-terminus, the 378-residue chain is 3-ketosteroid-9-alpha-monooxygenase, oxygenase component (378 aa).

In terms of domain architecture, Rieske spans 26-128 (WHCIGLAKDF…TMERNGVLFV (103 aa)). Residues cysteine 67, histidine 69, cysteine 86, and histidine 89 each contribute to the [2Fe-2S] cluster site. Residues asparagine 175, histidine 181, histidine 186, and aspartate 305 each contribute to the Fe cation site.

Homotrimer. The two-component system 3-ketosteroid-9-alpha-monooxygenase is composed of an oxygenase component KshA and a reductase component KshB. Requires [2Fe-2S] cluster as cofactor. The cofactor is Fe cation.

The enzyme catalyses androsta-1,4-diene-3,17-dione + 2 reduced [2Fe-2S]-[ferredoxin] + O2 + 2 H(+) = 9alpha-hydroxyandrosta-1,4-diene-3,17-dione + 2 oxidized [2Fe-2S]-[ferredoxin] + H2O. KSH activity is completely inhibited by zinc ions. KshA is specifically inhibited by Fe(3+), Co(2+), Zn(2+) and Ni(2+) ions. Functionally, in vitro, catalyzes the introduction of a 9alpha-hydroxyl moiety into the ring B of 3-ketosteroid substrates such as 1,4-androstadiene-3,17-dione (ADD), 4-androstene-3,17-dione (AD), 4-androstene-17beta-ol-3-one (testosterone), 4-pregnene-3,20-dione (progesterone), 19-nor-4-androstene-3,17-dione (nordion), 1-(5alpha)-androstene-3,17-dione, 5alpha-androstane-3,17-dione and 5beta-androstane-3,17-dione. KSH has the highest activity with 3-keto-delta4 steroid substrates. The polypeptide is 3-ketosteroid-9-alpha-monooxygenase, oxygenase component (Rhodococcus rhodochrous).